Consider the following 359-residue polypeptide: Phosphoserine aminotransferase (359 aa).

Arg-42 is an L-glutamate binding site. Pyridoxal 5'-phosphate contacts are provided by residues 76 to 77 (AS), Trp-102, Thr-152, Asp-171, and Gln-194. Lys-195 carries the post-translational modification N6-(pyridoxal phosphate)lysine. Residue 236–237 (NT) coordinates pyridoxal 5'-phosphate.

This sequence belongs to the class-V pyridoxal-phosphate-dependent aminotransferase family. SerC subfamily. As to quaternary structure, homodimer. Pyridoxal 5'-phosphate is required as a cofactor.

It localises to the cytoplasm. The catalysed reaction is O-phospho-L-serine + 2-oxoglutarate = 3-phosphooxypyruvate + L-glutamate. It carries out the reaction 4-(phosphooxy)-L-threonine + 2-oxoglutarate = (R)-3-hydroxy-2-oxo-4-phosphooxybutanoate + L-glutamate. Its pathway is amino-acid biosynthesis; L-serine biosynthesis; L-serine from 3-phospho-D-glycerate: step 2/3. The protein operates within cofactor biosynthesis; pyridoxine 5'-phosphate biosynthesis; pyridoxine 5'-phosphate from D-erythrose 4-phosphate: step 3/5. In terms of biological role, catalyzes the reversible conversion of 3-phosphohydroxypyruvate to phosphoserine and of 3-hydroxy-2-oxo-4-phosphonooxybutanoate to phosphohydroxythreonine. The polypeptide is Phosphoserine aminotransferase (Ruthia magnifica subsp. Calyptogena magnifica).